Consider the following 497-residue polypeptide: Glycerol kinase (497 aa).

Residue threonine 12 coordinates ADP. Residues threonine 12, threonine 13, and serine 14 each contribute to the ATP site. Position 12 (threonine 12) interacts with sn-glycerol 3-phosphate. Arginine 16 contributes to the ADP binding site. Sn-glycerol 3-phosphate-binding residues include arginine 82, glutamate 83, tyrosine 134, and aspartate 243. Residues arginine 82, glutamate 83, tyrosine 134, aspartate 243, and glutamine 244 each coordinate glycerol. Positions 265 and 308 each coordinate ADP. Positions 265, 308, 312, and 411 each coordinate ATP. Glycine 411 lines the ADP pocket.

This sequence belongs to the FGGY kinase family.

The enzyme catalyses glycerol + ATP = sn-glycerol 3-phosphate + ADP + H(+). It functions in the pathway polyol metabolism; glycerol degradation via glycerol kinase pathway; sn-glycerol 3-phosphate from glycerol: step 1/1. Its activity is regulated as follows. Inhibited by fructose 1,6-bisphosphate (FBP). In terms of biological role, key enzyme in the regulation of glycerol uptake and metabolism. Catalyzes the phosphorylation of glycerol to yield sn-glycerol 3-phosphate. The sequence is that of Glycerol kinase from Allorhizobium ampelinum (strain ATCC BAA-846 / DSM 112012 / S4) (Agrobacterium vitis (strain S4)).